Here is a 117-residue protein sequence, read N- to C-terminus: Large ribosomal subunit protein bL19 (117 aa).

It belongs to the bacterial ribosomal protein bL19 family.

Functionally, this protein is located at the 30S-50S ribosomal subunit interface and may play a role in the structure and function of the aminoacyl-tRNA binding site. This Alkalilimnicola ehrlichii (strain ATCC BAA-1101 / DSM 17681 / MLHE-1) protein is Large ribosomal subunit protein bL19.